A 1097-amino-acid chain; its full sequence is MSFNFKWPTFSDEFHTSAAQMLNSALNRGPKPKVIADDILVEELGMGTIPPELEILEIGDLGTDRFRGIFRLTYAGDAHLVLKTKVQANPLSKPNRPDIGLFPSSNASRGILFAAAPLIVPMHLRLSSVKLRAIVVLVVSKAKGITLVFKNDPLESVEVSSTFDSVAVIQKYLQQEIEGQLREMFREDLPGIIHRLSQKWLSGEAKSEKDKVKQKAEAEEPPARSREPTLTRSTSEPLVALETASAPGGTPRKSHSKAKKHSRSGASVADFAASPCQSPQRPRQSPRRPRHVAKAASTSAVPLHSEFSATHASPFDAAFPDIENYDPTYGLRPDDLPTHSGFSGLGRLAQRGLGGLKDLTASPVFDLDTALGAADVDLDGAAVFEDLNRQSDDEGSEAEQSQDAHSSSHDGKHDEGDATTDSDLDAVLHDVGDDVSDLDVQERDNLVDTSIDYSRFGYPPASAAFSDAHELTRASSIIFDDQPQLTRKHSKRGSVSGRSSTRARRPSSSRSDRSACTSSLRKREEAEVVYETIPAVGGGIVTRPRVYHIASKVQPPEVDWDDEDTARPSQYGGTPSTRTGTTRFGSDYGSATMGAQSSRTNTVRGIHDLPHLNSAFVSRDGSEESLIDLPPESYHSSDASLPHALDAERSSVSGSDSRRGLTNPTSRESSYRDLSSQDLHWDHSASSTAPSSSQSLHWDMHSRNDAAARTVNVKAGQNAESNSGLSFRKNKSANHQRSITLGGGGGGGFPLRRPGEGPGMSATPARTRASAAASARSRPGFITYATSPPGDSSGWQRSPPLRASSDRDVAFSTSPGVAQDMLSISPFRDSSLHHGSPRETSNVAGAYASASNSPYTSGHNKGTQGAGAAPTHLSIDASAHFLDLVKSNHTLSPFTRSMEHFTVRSAPVTPGWQTASGNVSVVGSSAASGTGTTSGSSQTGANAKSGKAGSDKTRSQDHLSVGHTVAEPKTHCQADSAAPSSGLPARRRRTFQLGGSSSRDDTASNKPNNTSTGQGEDSQDNSAAPGSDDYGFARYAGSGPQPFRASGSSASSAITDSSSKGNRLGSKDLRRRSRPGSMGPPSEAARLSALRWEAIRE.

In terms of domain architecture, SMP-LTD spans 1-198; it reads MSFNFKWPTF…LPGIIHRLSQ (198 aa). Disordered regions lie at residues 204–305, 317–343, 390–427, 480–520, 556–600, 645–675, 716–817, and 923–1097; these read EAKS…PLHS, AAFP…SGFS, QSDD…LDAV, DDQP…TSSL, PEVD…SSRT, LDAE…RDLS, GQNA…SPGV, and GSSA…AIRE. The segment covering 205-229 has biased composition (basic and acidic residues); the sequence is AKSEKDKVKQKAEAEEPPARSREPT. The span at 252-263 shows a compositional bias: basic residues; it reads RKSHSKAKKHSR. The span at 274-283 shows a compositional bias: low complexity; sequence SPCQSPQRPR. Positions 284–293 are enriched in basic residues; that stretch reads QSPRRPRHVA. The segment covering 406–416 has biased composition (basic and acidic residues); it reads SSSHDGKHDEG. Low complexity-rich tracts occupy residues 508-519 and 572-586; these read SSRSDRSACTSS and GGTP…RFGS. Positions 662 to 675 are enriched in polar residues; that stretch reads TNPTSRESSYRDLS. The segment covering 759-779 has biased composition (low complexity); it reads GMSATPARTRASAAASARSRP. Over residues 784–796 the composition is skewed to polar residues; that stretch reads YATSPPGDSSGWQ. Residues 923–943 are compositionally biased toward low complexity; it reads GSSAASGTGTTSGSSQTGANA. The segment covering 1004-1024 has biased composition (polar residues); sequence SNKPNNTSTGQGEDSQDNSAA. Residues 1045–1059 are compositionally biased toward low complexity; the sequence is ASGSSASSAITDSSS.

Belongs to the MDM34 family. As to quaternary structure, component of the ER-mitochondria encounter structure (ERMES) or MDM complex, composed of MMM1, MDM10, MDM12 and MDM34.

The protein localises to the mitochondrion outer membrane. In terms of biological role, component of the ERMES/MDM complex, which serves as a molecular tether to connect the endoplasmic reticulum (ER) and mitochondria. Components of this complex are involved in the control of mitochondrial shape and protein biogenesis, and function in nonvesicular lipid trafficking between the ER and mitochondria. MDM34 is required for the interaction of the ER-resident membrane protein MMM1 and the outer mitochondrial membrane-resident beta-barrel protein MDM10. This is Mitochondrial distribution and morphology protein 34 from Mycosarcoma maydis (Corn smut fungus).